We begin with the raw amino-acid sequence, 280 residues long: Phosphatidylglycerol--prolipoprotein diacylglyceryl transferase (280 aa).

Transmembrane regions (helical) follow at residues 30–50 (WYGLAYVVGILLGWFYARRIV), 71–91 (FLLWAAGGIVLGGRIGYILFY), 106–126 (IWNGGMSFHGGLVGTTLAMII), and 132–152 (AIPIWSLFDVVAAVVPIGLFF). Position 154 (Arg-154) interacts with a 1,2-diacyl-sn-glycero-3-phospho-(1'-sn-glycerol). The next 3 membrane-spanning stretches (helical) occupy residues 188–208 (QLYEAALEGLVLLAVLAWFVY), 217–237 (GLVTGIFVCGYAASRIFVEFF), and 251–271 (WLTMGMVLSVPMALIGIWAIA).

This sequence belongs to the Lgt family.

The protein localises to the cell inner membrane. It catalyses the reaction L-cysteinyl-[prolipoprotein] + a 1,2-diacyl-sn-glycero-3-phospho-(1'-sn-glycerol) = an S-1,2-diacyl-sn-glyceryl-L-cysteinyl-[prolipoprotein] + sn-glycerol 1-phosphate + H(+). The protein operates within protein modification; lipoprotein biosynthesis (diacylglyceryl transfer). Functionally, catalyzes the transfer of the diacylglyceryl group from phosphatidylglycerol to the sulfhydryl group of the N-terminal cysteine of a prolipoprotein, the first step in the formation of mature lipoproteins. This chain is Phosphatidylglycerol--prolipoprotein diacylglyceryl transferase, found in Sinorhizobium medicae (strain WSM419) (Ensifer medicae).